The following is a 297-amino-acid chain: Protein-L-isoaspartate O-methyltransferase (297 aa).

Residues 20–57 (RKPAPARTAGMPAVGAPGPAQAQAKARDKQPSAPTAAA) are disordered. A compositionally biased stretch (low complexity) spans 28–43 (AGMPAVGAPGPAQAQA). The active site involves serine 133.

It belongs to the methyltransferase superfamily. L-isoaspartyl/D-aspartyl protein methyltransferase family.

Its subcellular location is the cytoplasm. It catalyses the reaction [protein]-L-isoaspartate + S-adenosyl-L-methionine = [protein]-L-isoaspartate alpha-methyl ester + S-adenosyl-L-homocysteine. Functionally, catalyzes the methyl esterification of L-isoaspartyl residues in peptides and proteins that result from spontaneous decomposition of normal L-aspartyl and L-asparaginyl residues. It plays a role in the repair and/or degradation of damaged proteins. In Cupriavidus pinatubonensis (strain JMP 134 / LMG 1197) (Cupriavidus necator (strain JMP 134)), this protein is Protein-L-isoaspartate O-methyltransferase.